The sequence spans 407 residues: S-adenosylmethionine synthase (407 aa).

Residue 140–145 (GQGSAD) participates in ATP binding.

The protein belongs to the AdoMet synthase 2 family. Mg(2+) is required as a cofactor.

It carries out the reaction L-methionine + ATP + H2O = S-adenosyl-L-methionine + phosphate + diphosphate. Its pathway is amino-acid biosynthesis; S-adenosyl-L-methionine biosynthesis; S-adenosyl-L-methionine from L-methionine: step 1/1. In terms of biological role, catalyzes the formation of S-adenosylmethionine from methionine and ATP. The sequence is that of S-adenosylmethionine synthase from Methanosphaera stadtmanae (strain ATCC 43021 / DSM 3091 / JCM 11832 / MCB-3).